Here is a 449-residue protein sequence, read N- to C-terminus: N-succinylarginine dihydrolase (449 aa).

Residues 19 to 28 (GGLSYGNVAS), N110, and 137 to 138 (HR) contribute to the substrate site. The segment at 23–43 (YGNVASQSNSQQASNPREAAR) is disordered. Low complexity predominate over residues 27–37 (ASQSNSQQASN). E174 is an active-site residue. R214 is a binding site for substrate. The active site involves H250. D252 and N365 together coordinate substrate. C371 (nucleophile) is an active-site residue.

It belongs to the succinylarginine dihydrolase family. Homodimer.

The enzyme catalyses N(2)-succinyl-L-arginine + 2 H2O + 2 H(+) = N(2)-succinyl-L-ornithine + 2 NH4(+) + CO2. It functions in the pathway amino-acid degradation; L-arginine degradation via AST pathway; L-glutamate and succinate from L-arginine: step 2/5. Functionally, catalyzes the hydrolysis of N(2)-succinylarginine into N(2)-succinylornithine, ammonia and CO(2). The protein is N-succinylarginine dihydrolase of Pseudomonas putida (strain ATCC 700007 / DSM 6899 / JCM 31910 / BCRC 17059 / LMG 24140 / F1).